A 415-amino-acid polypeptide reads, in one-letter code: MSEEVSKNLSETLFVKHKQAKETSALTQYMPTSQSLLDEIKEKNGFSWYRNLRRLQWVWQGVDPIEQEQVLARIASSKHSRTDEQWLDTVMGYHSGNWAYEWTRLGMEHQKRAGEMTNEAASEALFSASLCYSIAGYPHLKSDNLAIQAQVLANSAYLEAAKKSKYIIKQLEIPFEKGKITAHLHLTNTDKPHPVVIVSAGLDSLQTDMWRLFRDHLAKHDIAMLTVDMPSVGYSSKYPLTEDYSRLHQAVLNELFSIPYVDHHRVGLIGFRFGGNAMVRLSFLEQEKIKACVILGAPIHDIFASPQKLQQMPKMYLDVLASRLGKSVVDIYSLSGQMAAWSLKVQGFLSSRKTKVPILAMSLEGDPVSPYSDNQMVAFFSTYGKAKKISSKTITQGYEQSLDLAIKWLEDELLR.

Belongs to the FrsA family. In terms of assembly, monomer in solution. Homodimer. Forms a 1:1 complex with the unphosphorylated form of the EIIA component of the glucose-specific PTS system (IIAGlc).

It carries out the reaction a carboxylic ester + H2O = an alcohol + a carboxylate + H(+). In terms of biological role, catalyzes the hydrolysis of esters. In vitro, prefers short chain alkanoate ester as substrate. Displays highest activity towards p-nitrophenyl acetate (pNPA). Has weaker activity towards p-nitrophenyl butyrate (pNPB). This is Esterase FrsA from Vibrio vulnificus (strain CMCP6).